We begin with the raw amino-acid sequence, 144 residues long: 3-dehydroquinate dehydratase (144 aa).

Tyr22 serves as the catalytic Proton acceptor. Asn73, His79, and Asp86 together coordinate substrate. Residue His99 is the Proton donor of the active site. Substrate contacts are provided by residues 100 to 101 (IS) and Arg110.

The protein belongs to the type-II 3-dehydroquinase family. As to quaternary structure, homododecamer.

The catalysed reaction is 3-dehydroquinate = 3-dehydroshikimate + H2O. The protein operates within metabolic intermediate biosynthesis; chorismate biosynthesis; chorismate from D-erythrose 4-phosphate and phosphoenolpyruvate: step 3/7. Catalyzes a trans-dehydration via an enolate intermediate. This chain is 3-dehydroquinate dehydratase, found in Clostridium acetobutylicum (strain ATCC 824 / DSM 792 / JCM 1419 / IAM 19013 / LMG 5710 / NBRC 13948 / NRRL B-527 / VKM B-1787 / 2291 / W).